A 448-amino-acid polypeptide reads, in one-letter code: Biotin carboxylase (448 aa).

The region spanning 1–445 (MLEKVVIANR…NIHYLEKKLG (445 aa)) is the Biotin carboxylation domain. ATP contacts are provided by residues Lys-116, Lys-159, 165–166 (GG), 201–204 (EKYL), His-209, and His-236. One can recognise an ATP-grasp domain in the interval 120–317 (IKAMKKAGVP…LVKEQLRIAA (198 aa)). Hydrogencarbonate is bound at residue Lys-238. ATP is bound by residues Glu-276 and Glu-288. Residues Glu-276, Glu-288, and Asn-290 each contribute to the Mg(2+) site. Positions 276, 288, and 290 each coordinate Mn(2+). Hydrogencarbonate contacts are provided by Arg-292, Val-295, and Arg-338. The active site involves Arg-292. Residue Arg-338 coordinates biotin.

In terms of assembly, acetyl-CoA carboxylase is a heterohexamer of biotin carboxyl carrier protein, biotin carboxylase and the two subunits of carboxyl transferase in a 2:2 complex. The cofactor is Mg(2+). Requires Mn(2+) as cofactor.

It catalyses the reaction N(6)-biotinyl-L-lysyl-[protein] + hydrogencarbonate + ATP = N(6)-carboxybiotinyl-L-lysyl-[protein] + ADP + phosphate + H(+). It functions in the pathway lipid metabolism; malonyl-CoA biosynthesis; malonyl-CoA from acetyl-CoA: step 1/1. In terms of biological role, this protein is a component of the acetyl coenzyme A carboxylase complex; first, biotin carboxylase catalyzes the carboxylation of the carrier protein and then the transcarboxylase transfers the carboxyl group to form malonyl-CoA. This chain is Biotin carboxylase (accC), found in Haemophilus influenzae (strain ATCC 51907 / DSM 11121 / KW20 / Rd).